Reading from the N-terminus, the 316-residue chain is Conjugated bile acid hydrolase (316 aa).

Catalysis depends on Cys-2, which acts as the Nucleophile. Residues Cys-2 and Arg-18 each contribute to the deoxycholate site. Asn-81 is a taurine binding site.

This sequence belongs to the peptidase C59 family.

The catalysed reaction is cholate + taurine = taurocholate + H2O. It catalyses the reaction taurodeoxycholate + H2O = deoxycholate + taurine. It carries out the reaction taurochenodeoxycholate + H2O = chenodeoxycholate + taurine. The enzyme catalyses glycocholate + H2O = cholate + glycine. Its pathway is lipid metabolism; bile acid biosynthesis. With respect to regulation, glycocholate hydrolysis is inhibited by various previously identified BSH inhibitors, including KIO(3), NaHIO(3), NaIO(4), CuCl(2), menadione, riboflavin, gossypetin, and the antibiotics oxytetracycline, demeclocycline hydrochloride and methacycline hydrochloride. Functionally, bile salt hydrolase that catalyzes the deconjugation of glycine- and taurine-linked bile salts, which occurs naturally in the intestines of animals, releasing amino acid residues and deconjugated bile salts (bile acids). Can hydrolyze the amide bond in the bile salts taurocholate (TCA), taurodeoxycholate (TDCA), taurochenodeoxycholate (TCDCA), taurohyodeoxycholate (THDCA) and tauroursodeoxycholate (TUDCA). Oh et al. did not detect activity with the glycine-conjugated bile salts glycocholate (GCA), glycodeoxycholate (GDCA) and glycochenodeoxycholate (GCDCA). However, a later study shows activity toward glycocholate (GCA). This chain is Conjugated bile acid hydrolase, found in Lactobacillus acidophilus.